We begin with the raw amino-acid sequence, 314 residues long: 3'-5' exoribonuclease YhaM (314 aa).

Residues 163–279 (HVVSMLHLAK…LHYIDNLDAK (117 aa)) form the HD domain.

This sequence belongs to the YhaM family.

Functionally, shows a 3'-5' exoribonuclease activity. In Bacillus pumilus (strain SAFR-032), this protein is 3'-5' exoribonuclease YhaM.